The sequence spans 450 residues: 3-phosphoshikimate 1-carboxyvinyltransferase (450 aa).

3-phosphoshikimate-binding residues include K28, S29, and R33. Phosphoenolpyruvate is bound at residue K28. G100 and R128 together coordinate phosphoenolpyruvate. 3-phosphoshikimate-binding residues include S173, Q175, D326, and K353. Q175 is a binding site for phosphoenolpyruvate. Catalysis depends on D326, which acts as the Proton acceptor. Positions 357 and 402 each coordinate phosphoenolpyruvate.

Belongs to the EPSP synthase family. As to quaternary structure, monomer.

The protein resides in the cytoplasm. The catalysed reaction is 3-phosphoshikimate + phosphoenolpyruvate = 5-O-(1-carboxyvinyl)-3-phosphoshikimate + phosphate. The protein operates within metabolic intermediate biosynthesis; chorismate biosynthesis; chorismate from D-erythrose 4-phosphate and phosphoenolpyruvate: step 6/7. Catalyzes the transfer of the enolpyruvyl moiety of phosphoenolpyruvate (PEP) to the 5-hydroxyl of shikimate-3-phosphate (S3P) to produce enolpyruvyl shikimate-3-phosphate and inorganic phosphate. This is 3-phosphoshikimate 1-carboxyvinyltransferase from Brucella melitensis biotype 2 (strain ATCC 23457).